The primary structure comprises 176 residues: Cytochrome b (176 aa).

The next 3 membrane-spanning stretches (helical) occupy residues 33-53 (FGSL…FLAM), 77-98 (WLLR…YLHV), and 113-133 (WNVG…GYVL). Heme b-binding residues include H83 and H97.

It belongs to the cytochrome b family. The cytochrome bc1 complex contains 11 subunits: 3 respiratory subunits (MT-CYB, CYC1 and UQCRFS1), 2 core proteins (UQCRC1 and UQCRC2) and 6 low-molecular weight proteins (UQCRH/QCR6, UQCRB/QCR7, UQCRQ/QCR8, UQCR10/QCR9, UQCR11/QCR10 and a cleavage product of UQCRFS1). This cytochrome bc1 complex then forms a dimer. It depends on heme b as a cofactor.

Its subcellular location is the mitochondrion inner membrane. In terms of biological role, component of the ubiquinol-cytochrome c reductase complex (complex III or cytochrome b-c1 complex) that is part of the mitochondrial respiratory chain. The b-c1 complex mediates electron transfer from ubiquinol to cytochrome c. Contributes to the generation of a proton gradient across the mitochondrial membrane that is then used for ATP synthesis. The protein is Cytochrome b (MT-CYB) of Tadarida brasiliensis (Brazilian free-tailed bat).